The primary structure comprises 413 residues: Gamma-glutamyl phosphate reductase (413 aa).

This sequence belongs to the gamma-glutamyl phosphate reductase family.

The protein localises to the cytoplasm. It catalyses the reaction L-glutamate 5-semialdehyde + phosphate + NADP(+) = L-glutamyl 5-phosphate + NADPH + H(+). The protein operates within amino-acid biosynthesis; L-proline biosynthesis; L-glutamate 5-semialdehyde from L-glutamate: step 2/2. Its function is as follows. Catalyzes the NADPH-dependent reduction of L-glutamate 5-phosphate into L-glutamate 5-semialdehyde and phosphate. The product spontaneously undergoes cyclization to form 1-pyrroline-5-carboxylate. In Lactococcus lactis subsp. cremoris (strain SK11), this protein is Gamma-glutamyl phosphate reductase.